Here is a 226-residue protein sequence, read N- to C-terminus: Neuron-specific vesicular protein calcyon (226 aa).

The disordered stretch occupies residues 1–21 (MVKLGCSFSGKPGKEAGDQDG). The Extracellular segment spans residues 1–88 (MVKLGCSFSG…EEGRRLPTAR (88 aa)). The helical transmembrane segment at 89–109 (MIAFAMALLGCVLIMYKAIWY) threads the bilayer. The Cytoplasmic segment spans residues 110 to 226 (DQFTCPDGFL…AEGVPSQPPK (117 aa)). The disordered stretch occupies residues 177–226 (HKGTTPAAMAVSTAAAAAAAEGTEPSGKSLDTREKEDPQKAEGVPSQPPK). A compositionally biased stretch (low complexity) spans 183-196 (AAMAVSTAAAAAAA). Positions 206 to 216 (LDTREKEDPQK) are enriched in basic and acidic residues.

This sequence belongs to the NSG family. Interacts with CLTA. As to expression, most abundant in brain. Also expressed in testis and ovary and, at much lower levels, in kidney and heart.

It is found in the cytoplasmic vesicle membrane. Its subcellular location is the cell membrane. In terms of biological role, interacts with clathrin light chain A and stimulates clathrin self-assembly and clathrin-mediated endocytosis. This chain is Neuron-specific vesicular protein calcyon (Caly), found in Mus musculus (Mouse).